A 454-amino-acid polypeptide reads, in one-letter code: L-serine dehydratase TdcG (454 aa).

It belongs to the iron-sulfur dependent L-serine dehydratase family. [4Fe-4S] cluster serves as cofactor.

The enzyme catalyses L-serine = pyruvate + NH4(+). The protein operates within amino-acid degradation; L-threonine degradation via propanoate pathway. The polypeptide is L-serine dehydratase TdcG (tdcG) (Escherichia coli (strain K12)).